Here is a 209-residue protein sequence, read N- to C-terminus: Histidine biosynthesis bifunctional protein HisIE (209 aa).

The phosphoribosyl-AMP cyclohydrolase stretch occupies residues 1–116 (MKQADELRFN…EEQAADRFGI (116 aa)). A phosphoribosyl-ATP pyrophosphohydrolase region spans residues 117 to 209 (MNELERVIAE…LKKRHSEIEE (93 aa)).

The protein in the N-terminal section; belongs to the PRA-CH family. This sequence in the C-terminal section; belongs to the PRA-PH family.

It localises to the cytoplasm. It carries out the reaction 1-(5-phospho-beta-D-ribosyl)-ATP + H2O = 1-(5-phospho-beta-D-ribosyl)-5'-AMP + diphosphate + H(+). The catalysed reaction is 1-(5-phospho-beta-D-ribosyl)-5'-AMP + H2O = 1-(5-phospho-beta-D-ribosyl)-5-[(5-phospho-beta-D-ribosylamino)methylideneamino]imidazole-4-carboxamide. Its pathway is amino-acid biosynthesis; L-histidine biosynthesis; L-histidine from 5-phospho-alpha-D-ribose 1-diphosphate: step 2/9. It functions in the pathway amino-acid biosynthesis; L-histidine biosynthesis; L-histidine from 5-phospho-alpha-D-ribose 1-diphosphate: step 3/9. The protein is Histidine biosynthesis bifunctional protein HisIE (hisI) of Bacillus subtilis (strain 168).